We begin with the raw amino-acid sequence, 451 residues long: Bifunctional protein GlmU (451 aa).

Residues Met-1 to Arg-217 are pyrophosphorylase. UDP-N-acetyl-alpha-D-glucosamine is bound by residues Leu-6–Gly-9, Lys-20, Gln-68, Gly-73–Thr-74, Tyr-95–Asp-97, Gly-134, Glu-146, Asn-161, and Asn-215. Residue Asp-97 coordinates Mg(2+). Mg(2+) is bound at residue Asn-215. The segment at Ile-218 to Glu-238 is linker. Residues Gly-239–Glu-451 form an N-acetyltransferase region. UDP-N-acetyl-alpha-D-glucosamine is bound by residues Arg-320 and Lys-338. His-350 (proton acceptor) is an active-site residue. Residues Tyr-353 and Asn-364 each coordinate UDP-N-acetyl-alpha-D-glucosamine. Residues Ala-367, Asn-373 to Tyr-374, Ser-392, Ala-410, and Arg-427 each bind acetyl-CoA.

The protein in the N-terminal section; belongs to the N-acetylglucosamine-1-phosphate uridyltransferase family. It in the C-terminal section; belongs to the transferase hexapeptide repeat family. Homotrimer. Requires Mg(2+) as cofactor.

The protein resides in the cytoplasm. It carries out the reaction alpha-D-glucosamine 1-phosphate + acetyl-CoA = N-acetyl-alpha-D-glucosamine 1-phosphate + CoA + H(+). The enzyme catalyses N-acetyl-alpha-D-glucosamine 1-phosphate + UTP + H(+) = UDP-N-acetyl-alpha-D-glucosamine + diphosphate. It participates in nucleotide-sugar biosynthesis; UDP-N-acetyl-alpha-D-glucosamine biosynthesis; N-acetyl-alpha-D-glucosamine 1-phosphate from alpha-D-glucosamine 6-phosphate (route II): step 2/2. It functions in the pathway nucleotide-sugar biosynthesis; UDP-N-acetyl-alpha-D-glucosamine biosynthesis; UDP-N-acetyl-alpha-D-glucosamine from N-acetyl-alpha-D-glucosamine 1-phosphate: step 1/1. Its pathway is bacterial outer membrane biogenesis; LPS lipid A biosynthesis. Its function is as follows. Catalyzes the last two sequential reactions in the de novo biosynthetic pathway for UDP-N-acetylglucosamine (UDP-GlcNAc). The C-terminal domain catalyzes the transfer of acetyl group from acetyl coenzyme A to glucosamine-1-phosphate (GlcN-1-P) to produce N-acetylglucosamine-1-phosphate (GlcNAc-1-P), which is converted into UDP-GlcNAc by the transfer of uridine 5-monophosphate (from uridine 5-triphosphate), a reaction catalyzed by the N-terminal domain. The chain is Bifunctional protein GlmU from Thermosipho africanus (strain TCF52B).